Reading from the N-terminus, the 274-residue chain is Formamidopyrimidine-DNA glycosylase (274 aa).

Pro2 functions as the Schiff-base intermediate with DNA in the catalytic mechanism. The Proton donor role is filled by Glu3. Lys58 (proton donor; for beta-elimination activity) is an active-site residue. Positions 92 and 111 each coordinate DNA. Residues 239 to 273 form an FPG-type; degenerate zinc finger; that stretch reads HVYGREGEPCERCGTIIEKIKVAQRGTHFCPLEQR. The Proton donor; for delta-elimination activity role is filled by Arg263.

This sequence belongs to the FPG family. As to quaternary structure, monomer. It depends on Zn(2+) as a cofactor.

It carries out the reaction Hydrolysis of DNA containing ring-opened 7-methylguanine residues, releasing 2,6-diamino-4-hydroxy-5-(N-methyl)formamidopyrimidine.. It catalyses the reaction 2'-deoxyribonucleotide-(2'-deoxyribose 5'-phosphate)-2'-deoxyribonucleotide-DNA = a 3'-end 2'-deoxyribonucleotide-(2,3-dehydro-2,3-deoxyribose 5'-phosphate)-DNA + a 5'-end 5'-phospho-2'-deoxyribonucleoside-DNA + H(+). Its function is as follows. Involved in base excision repair of DNA damaged by oxidation or by mutagenic agents. Acts as a DNA glycosylase that recognizes and removes damaged bases. Has a preference for oxidized purines, such as 7,8-dihydro-8-oxoguanine (8-oxoG). Has AP (apurinic/apyrimidinic) lyase activity and introduces nicks in the DNA strand. Cleaves the DNA backbone by beta-delta elimination to generate a single-strand break at the site of the removed base with both 3'- and 5'-phosphates. The sequence is that of Formamidopyrimidine-DNA glycosylase from Lactiplantibacillus plantarum (strain ATCC BAA-793 / NCIMB 8826 / WCFS1) (Lactobacillus plantarum).